The following is a 206-amino-acid chain: Regulator of rDNA transcription 14 (206 aa).

Residues 178–206 are disordered; it reads FVKDHRYPGLTPGLAPVGLSDEEDSSEED. 3 positions are modified to phosphoserine: Ser-197, Ser-202, and Ser-203. Acidic residues predominate over residues 197-206; sequence SDEEDSSEED.

This sequence belongs to the RRT14 family.

The protein resides in the nucleus. Its subcellular location is the nucleolus. Involved in ribosome biogenesis, probably through modulation of rDNA transcription. The protein is Regulator of rDNA transcription 14 (RRT14) of Saccharomyces cerevisiae (strain AWRI1631) (Baker's yeast).